A 208-amino-acid chain; its full sequence is Ubiquinone biosynthesis protein COQ4 homolog, mitochondrial (208 aa).

4 residues coordinate Zn(2+): His-105, Asp-106, His-109, and Glu-122.

This sequence belongs to the COQ4 family. Component of a multi-subunit COQ enzyme complex. Zn(2+) is required as a cofactor.

It is found in the mitochondrion inner membrane. The catalysed reaction is a 4-hydroxy-3-methoxy-5-(all-trans-polyprenyl)benzoate + H(+) = a 2-methoxy-6-(all-trans-polyprenyl)phenol + CO2. It functions in the pathway cofactor biosynthesis; ubiquinone biosynthesis. In terms of biological role, lyase that catalyzes the C1-decarboxylation of 4-hydroxy-3-methoxy-5-(all-trans-polyprenyl)benzoic acid into 2-methoxy-6-(all-trans-polyprenyl)phenol during ubiquinone biosynthesis. In Nematostella vectensis (Starlet sea anemone), this protein is Ubiquinone biosynthesis protein COQ4 homolog, mitochondrial.